The following is a 394-amino-acid chain: Elongation factor Tu (394 aa).

The 195-residue stretch at 10-204 (KPHINVGTIG…FLDSYIPEPK (195 aa)) folds into the tr-type G domain. Positions 19–26 (GHVDHGKT) are G1. 19–26 (GHVDHGKT) lines the GTP pocket. T26 lines the Mg(2+) pocket. The G2 stretch occupies residues 60–64 (GITIN). Positions 81-84 (DCPG) are G3. GTP contacts are provided by residues 81–85 (DCPGH) and 136–139 (NKCD). The tract at residues 136-139 (NKCD) is G4. A G5 region spans residues 174–176 (SAL).

The protein belongs to the TRAFAC class translation factor GTPase superfamily. Classic translation factor GTPase family. EF-Tu/EF-1A subfamily. As to quaternary structure, monomer.

Its subcellular location is the cytoplasm. The enzyme catalyses GTP + H2O = GDP + phosphate + H(+). GTP hydrolase that promotes the GTP-dependent binding of aminoacyl-tRNA to the A-site of ribosomes during protein biosynthesis. The protein is Elongation factor Tu of Buchnera aphidicola subsp. Acyrthosiphon pisum (strain 5A).